A 70-amino-acid chain; its full sequence is Spore germination protein-like protein YpzD (70 aa).

It belongs to the GerPA/GerPF family.

The polypeptide is Spore germination protein-like protein YpzD (ypzD) (Bacillus subtilis (strain 168)).